The primary structure comprises 63 residues: MNFYKVFIFVALILAISLGQSEAGWLKKIGKKIERIGQHTRDATIQGLGIAQQAANVAATARG.

An N-terminal signal peptide occupies residues 1–23; the sequence is MNFYKVFIFVALILAISLGQSEA. Position 62 is an arginine amide (arginine 62).

The protein belongs to the cecropin family.

It localises to the secreted. Functionally, cecropins have lytic and antibacterial activity against several Gram-positive and Gram-negative bacteria. This chain is Cecropin-1/3 (Cec1), found in Drosophila virilis (Fruit fly).